The sequence spans 249 residues: Proteasome subunit alpha (249 aa).

Residues 229–249 (EAREAEEAAEAQSSEDGGATD) are disordered.

The protein belongs to the peptidase T1A family. The 20S proteasome core is composed of 14 alpha and 14 beta subunits that assemble into four stacked heptameric rings, resulting in a barrel-shaped structure. The two inner rings, each composed of seven catalytic beta subunits, are sandwiched by two outer rings, each composed of seven alpha subunits. The catalytic chamber with the active sites is on the inside of the barrel. Has a gated structure, the ends of the cylinder being occluded by the N-termini of the alpha-subunits. Is capped by the proteasome-associated ATPase, ARC.

The protein localises to the cytoplasm. The protein operates within protein degradation; proteasomal Pup-dependent pathway. The formation of the proteasomal ATPase ARC-20S proteasome complex, likely via the docking of the C-termini of ARC into the intersubunit pockets in the alpha-rings, may trigger opening of the gate for substrate entry. Interconversion between the open-gate and close-gate conformations leads to a dynamic regulation of the 20S proteasome proteolysis activity. In terms of biological role, component of the proteasome core, a large protease complex with broad specificity involved in protein degradation. The polypeptide is Proteasome subunit alpha (Thermobifida fusca (strain YX)).